A 567-amino-acid chain; its full sequence is Methionine--tRNA ligase (567 aa).

Residues 11–21 (PYVQTVPHLGN) carry the 'HIGH' region motif. Zn(2+) contacts are provided by cysteine 143, cysteine 146, cysteine 156, and cysteine 159. The 'KMSKS' region motif lies at 331–335 (KFSKS). Lysine 334 contacts ATP.

Belongs to the class-I aminoacyl-tRNA synthetase family. MetG type 1 subfamily. Requires Zn(2+) as cofactor.

The protein localises to the cytoplasm. It carries out the reaction tRNA(Met) + L-methionine + ATP = L-methionyl-tRNA(Met) + AMP + diphosphate. Its function is as follows. Is required not only for elongation of protein synthesis but also for the initiation of all mRNA translation through initiator tRNA(fMet) aminoacylation. The chain is Methionine--tRNA ligase from Pyrobaculum islandicum (strain DSM 4184 / JCM 9189 / GEO3).